Consider the following 793-residue polypeptide: ABC transporter G family member 1 (793 aa).

The segment covering 1–20 (MDSNNNNNNENEAFSGASES) has biased composition (low complexity). The tract at residues 1 to 96 (MDSNNNNNNE…NNNQNNNIIN (96 aa)) is disordered. A compositionally biased stretch (basic and acidic residues) spans 21 to 37 (SEFRKIVEENENEREFE). Positions 59–68 (ETINPNISLD) are enriched in polar residues. A coiled-coil region spans residues 67–102 (LDNNNNNNQNNQNNQNNNNNNNNQNNNIINNLNKKN). The segment covering 69–96 (NNNNNNQNNQNNQNNNNNNNNQNNNIIN) has biased composition (low complexity). Residues 123 to 364 (VQITEKGKKK…FNANGYHCSE (242 aa)) form the ABC transporter domain. 156 to 163 (GPSGAGKT) serves as a coordination point for ATP. A compositionally biased stretch (acidic residues) spans 382–398 (DQADSDDDDYNDEEEEI). The tract at residues 382-457 (DQADSDDDDY…QSTDGRARRR (76 aa)) is disordered. Gly residues predominate over residues 399 to 413 (GGGGGGSGGGAGGIE). The segment covering 421-437 (PTMNGSAVDNIKNNELK) has biased composition (polar residues). Residues 438-448 (QQQQQQQQQQQ) are compositionally biased toward low complexity. One can recognise an ABC transmembrane type-2 domain in the interval 527–785 (MAFKVNLIQA…VLTFLVLKLK (259 aa)). 7 helical membrane passes run 533-553 (LIQAIFQGLLCGIVYYQLGLG), 563-583 (VVAFIIMGVSFPAVMSTIHVF), 610-630 (FMDACIAVLLPMVTATIVYWM), 647-667 (FVLMLVLASQTCLSLGVLISS), 674-694 (VGTAVAPLIVILFFLFSGFFI), 701-721 (GWLVWFPYISFFRYMIEAAVI), and 764-784 (VWILVLYIIGFRVLTFLVLKL).

It belongs to the ABC transporter superfamily. ABCG family.

The protein localises to the membrane. The sequence is that of ABC transporter G family member 1 (abcG1) from Dictyostelium discoideum (Social amoeba).